The chain runs to 425 residues: Serine--tRNA ligase (425 aa).

Thr-233–Glu-235 serves as a coordination point for L-serine. Arg-264–Glu-266 serves as a coordination point for ATP. L-serine is bound at residue Glu-287. Glu-351–Ser-354 serves as a coordination point for ATP. Ser-385 is a binding site for L-serine.

This sequence belongs to the class-II aminoacyl-tRNA synthetase family. Type-1 seryl-tRNA synthetase subfamily. As to quaternary structure, homodimer. The tRNA molecule binds across the dimer.

It is found in the cytoplasm. It carries out the reaction tRNA(Ser) + L-serine + ATP = L-seryl-tRNA(Ser) + AMP + diphosphate + H(+). The enzyme catalyses tRNA(Sec) + L-serine + ATP = L-seryl-tRNA(Sec) + AMP + diphosphate + H(+). Its pathway is aminoacyl-tRNA biosynthesis; selenocysteinyl-tRNA(Sec) biosynthesis; L-seryl-tRNA(Sec) from L-serine and tRNA(Sec): step 1/1. Catalyzes the attachment of serine to tRNA(Ser). Is also able to aminoacylate tRNA(Sec) with serine, to form the misacylated tRNA L-seryl-tRNA(Sec), which will be further converted into selenocysteinyl-tRNA(Sec). The chain is Serine--tRNA ligase from Prochlorococcus marinus (strain MIT 9215).